The chain runs to 171 residues: Large ribosomal subunit protein bL9 (171 aa).

The protein belongs to the bacterial ribosomal protein bL9 family.

Functionally, binds to the 23S rRNA. In Rickettsia peacockii (strain Rustic), this protein is Large ribosomal subunit protein bL9.